Reading from the N-terminus, the 182-residue chain is ATP synthase subunit b, chloroplastic (182 aa).

Residues 36 to 56 traverse the membrane as a helical segment; the sequence is ILLLLLGLMYVLKEFLGSILV.

Belongs to the ATPase B chain family. F-type ATPases have 2 components, F(1) - the catalytic core - and F(0) - the membrane proton channel. F(1) has five subunits: alpha(3), beta(3), gamma(1), delta(1), epsilon(1). F(0) has four main subunits: a(1), b(1), b'(1) and c(10-14). The alpha and beta chains form an alternating ring which encloses part of the gamma chain. F(1) is attached to F(0) by a central stalk formed by the gamma and epsilon chains, while a peripheral stalk is formed by the delta, b and b' chains.

The protein resides in the plastid. It localises to the chloroplast thylakoid membrane. Its function is as follows. F(1)F(0) ATP synthase produces ATP from ADP in the presence of a proton or sodium gradient. F-type ATPases consist of two structural domains, F(1) containing the extramembraneous catalytic core and F(0) containing the membrane proton channel, linked together by a central stalk and a peripheral stalk. During catalysis, ATP synthesis in the catalytic domain of F(1) is coupled via a rotary mechanism of the central stalk subunits to proton translocation. Functionally, component of the F(0) channel, it forms part of the peripheral stalk, linking F(1) to F(0). In Gracilaria tenuistipitata var. liui (Red alga), this protein is ATP synthase subunit b, chloroplastic.